The primary structure comprises 606 residues: KH domain-containing protein At4g18375 (606 aa).

A compositionally biased stretch (basic residues) spans 1 to 10 (MVERKKRKQI). The interval 1–26 (MVERKKRKQIQRNNSESNRNQKRRIS) is disordered. KH domains follow at residues 35 to 99 (LVVY…IGFT), 138 to 210 (NKEC…LFAV), 311 to 380 (ELVF…VEAV), 394 to 455 (NVKM…LIQI), and 535 to 599 (SSAL…ENLV).

The protein resides in the nucleus. This chain is KH domain-containing protein At4g18375, found in Arabidopsis thaliana (Mouse-ear cress).